We begin with the raw amino-acid sequence, 299 residues long: Probable lipid kinase YegS (299 aa).

In terms of domain architecture, DAGKc spans 2 to 133 (AEFPASLLIL…IDMAQVNKQT (132 aa)). Residues Thr40, 66 to 72 (GDGTINE), and Thr95 contribute to the ATP site. Residues Leu215, Asp218, and Leu220 each contribute to the Mg(2+) site. Glu271 functions as the Proton acceptor in the catalytic mechanism.

Belongs to the diacylglycerol/lipid kinase family. YegS lipid kinase subfamily. Mg(2+) serves as cofactor. The cofactor is Ca(2+).

The protein localises to the cytoplasm. Functionally, probably phosphorylates lipids; the in vivo substrate is unknown. The chain is Probable lipid kinase YegS from Shigella dysenteriae serotype 1 (strain Sd197).